We begin with the raw amino-acid sequence, 469 residues long: 3-isopropylmalate dehydratase large subunit (469 aa).

3 residues coordinate [4Fe-4S] cluster: cysteine 347, cysteine 410, and cysteine 413.

This sequence belongs to the aconitase/IPM isomerase family. LeuC type 1 subfamily. Heterodimer of LeuC and LeuD. It depends on [4Fe-4S] cluster as a cofactor.

The enzyme catalyses (2R,3S)-3-isopropylmalate = (2S)-2-isopropylmalate. The protein operates within amino-acid biosynthesis; L-leucine biosynthesis; L-leucine from 3-methyl-2-oxobutanoate: step 2/4. Catalyzes the isomerization between 2-isopropylmalate and 3-isopropylmalate, via the formation of 2-isopropylmaleate. The chain is 3-isopropylmalate dehydratase large subunit from Polynucleobacter necessarius subsp. necessarius (strain STIR1).